Consider the following 309-residue polypeptide: HPr kinase/phosphorylase (309 aa).

Catalysis depends on residues His-138 and Lys-159. Gly-153–Ser-160 contributes to the ATP binding site. Ser-160 contributes to the Mg(2+) binding site. Asp-177 serves as the catalytic Proton acceptor; for phosphorylation activity. Proton donor; for dephosphorylation activity. The segment at Leu-201–Asp-210 is important for the catalytic mechanism of both phosphorylation and dephosphorylation. Mg(2+) is bound at residue Glu-202. Arg-243 is a catalytic residue. Residues Pro-264–Arg-269 are important for the catalytic mechanism of dephosphorylation.

Belongs to the HPrK/P family. In terms of assembly, homohexamer. It depends on Mg(2+) as a cofactor.

It catalyses the reaction [HPr protein]-L-serine + ATP = [HPr protein]-O-phospho-L-serine + ADP + H(+). The enzyme catalyses [HPr protein]-O-phospho-L-serine + phosphate + H(+) = [HPr protein]-L-serine + diphosphate. In terms of biological role, catalyzes the ATP- as well as the pyrophosphate-dependent phosphorylation of a specific serine residue in HPr, a phosphocarrier protein of the phosphoenolpyruvate-dependent sugar phosphotransferase system (PTS). HprK/P also catalyzes the pyrophosphate-producing, inorganic phosphate-dependent dephosphorylation (phosphorolysis) of seryl-phosphorylated HPr (P-Ser-HPr). The two antagonistic activities of HprK/P are regulated by several intracellular metabolites, which change their concentration in response to the absence or presence of rapidly metabolisable carbon sources (glucose, fructose, etc.) in the growth medium. Therefore, by controlling the phosphorylation state of HPr, HPrK/P is a sensor enzyme that plays a major role in the regulation of carbon metabolism and sugar transport: it mediates carbon catabolite repression (CCR), and regulates PTS-catalyzed carbohydrate uptake and inducer exclusion. This chain is HPr kinase/phosphorylase, found in Streptococcus thermophilus (strain ATCC BAA-250 / LMG 18311).